A 257-amino-acid polypeptide reads, in one-letter code: 5-oxoprolinase subunit A (257 aa).

It belongs to the LamB/PxpA family. As to quaternary structure, forms a complex composed of PxpA, PxpB and PxpC.

It catalyses the reaction 5-oxo-L-proline + ATP + 2 H2O = L-glutamate + ADP + phosphate + H(+). In terms of biological role, catalyzes the cleavage of 5-oxoproline to form L-glutamate coupled to the hydrolysis of ATP to ADP and inorganic phosphate. The protein is 5-oxoprolinase subunit A of Natranaerobius thermophilus (strain ATCC BAA-1301 / DSM 18059 / JW/NM-WN-LF).